Here is a 2188-residue protein sequence, read N- to C-terminus: Glutamate synthase 2 [NADH], chloroplastic (2188 aa).

Residues 1–30 (MSAAQGLALKLRAAPAAGGVRGEKRRRAAS) constitute a chloroplast transit peptide. Disordered regions lie at residues 14-40 (APAA…ARPR) and 61-94 (VAPR…PESS). Low complexity predominate over residues 65–80 (ASASRQAEAGAGAGAA). C107 acts as the Nucleophile in catalysis. Residues 107–511 (CGVGFIAELS…PGMMLLVDFE (405 aa)) enclose the Glutamine amidotransferase type-2 domain. 1198 to 1255 (LAETHQTLVANGLRGRAVLQTDGQMKTGRDVAVACLLGAEEFGFSTAPLITLGCIMMR) contributes to the FMN binding site. 3 residues coordinate [3Fe-4S] cluster: C1251, C1257, and C1262. Residue 1974–1988 (GGGDTGTDCIGTSIR) coordinates NAD(+).

The protein belongs to the glutamate synthase family. In terms of assembly, monomer. It depends on [3Fe-4S] cluster as a cofactor. FAD is required as a cofactor. Requires FMN as cofactor. As to expression, expressed in leaf blades and sheaths.

The protein localises to the plastid. The protein resides in the chloroplast. The catalysed reaction is 2 L-glutamate + NAD(+) = L-glutamine + 2-oxoglutarate + NADH + H(+). The protein operates within amino-acid biosynthesis; L-glutamate biosynthesis via GLT pathway; L-glutamate from 2-oxoglutarate and L-glutamine (NAD(+) route): step 1/1. Its pathway is energy metabolism; nitrogen metabolism. Functionally, involved in glutamate biosynthesis. In Oryza sativa subsp. japonica (Rice), this protein is Glutamate synthase 2 [NADH], chloroplastic.